Here is a 444-residue protein sequence, read N- to C-terminus: Signal recognition particle 54 kDa protein (444 aa).

GTP-binding positions include 104–111 (GLQGSGKT), 184–188 (DTAGR), and 242–245 (TKLD).

Belongs to the GTP-binding SRP family. SRP54 subfamily. In terms of assembly, part of the signal recognition particle protein translocation system, which is composed of SRP and FtsY. Archaeal SRP consists of a 7S RNA molecule of 300 nucleotides and two protein subunits: SRP54 and SRP19.

It localises to the cytoplasm. It carries out the reaction GTP + H2O = GDP + phosphate + H(+). Involved in targeting and insertion of nascent membrane proteins into the cytoplasmic membrane. Binds to the hydrophobic signal sequence of the ribosome-nascent chain (RNC) as it emerges from the ribosomes. The SRP-RNC complex is then targeted to the cytoplasmic membrane where it interacts with the SRP receptor FtsY. This is Signal recognition particle 54 kDa protein from Methanothrix thermoacetophila (strain DSM 6194 / JCM 14653 / NBRC 101360 / PT) (Methanosaeta thermophila).